The chain runs to 206 residues: Holliday junction branch migration complex subunit RuvA (206 aa).

Residues 1 to 64 (MIGRLSGTIL…EDAQLLYGFN (64 aa)) form a domain I region. A domain II region spans residues 65-143 (KKSERELFRE…GWGEGDLFTP (79 aa)). The tract at residues 144-157 (ASDAAASNAEIQKY) is flexible linker. A domain III region spans residues 158–206 (SSARAEDEAVSALIALGYKALQAAKVVSQVVKPEMSSENIIREALRSMV).

It belongs to the RuvA family. In terms of assembly, homotetramer. Forms an RuvA(8)-RuvB(12)-Holliday junction (HJ) complex. HJ DNA is sandwiched between 2 RuvA tetramers; dsDNA enters through RuvA and exits via RuvB. An RuvB hexamer assembles on each DNA strand where it exits the tetramer. Each RuvB hexamer is contacted by two RuvA subunits (via domain III) on 2 adjacent RuvB subunits; this complex drives branch migration. In the full resolvosome a probable DNA-RuvA(4)-RuvB(12)-RuvC(2) complex forms which resolves the HJ.

Its subcellular location is the cytoplasm. Functionally, the RuvA-RuvB-RuvC complex processes Holliday junction (HJ) DNA during genetic recombination and DNA repair, while the RuvA-RuvB complex plays an important role in the rescue of blocked DNA replication forks via replication fork reversal (RFR). RuvA specifically binds to HJ cruciform DNA, conferring on it an open structure. The RuvB hexamer acts as an ATP-dependent pump, pulling dsDNA into and through the RuvAB complex. HJ branch migration allows RuvC to scan DNA until it finds its consensus sequence, where it cleaves and resolves the cruciform DNA. The sequence is that of Holliday junction branch migration complex subunit RuvA from Photobacterium profundum (strain SS9).